The primary structure comprises 150 residues: UPF0178 protein ECA0873 (150 aa).

It belongs to the UPF0178 family.

The protein is UPF0178 protein ECA0873 of Pectobacterium atrosepticum (strain SCRI 1043 / ATCC BAA-672) (Erwinia carotovora subsp. atroseptica).